Reading from the N-terminus, the 207-residue chain is Transcriptional regulatory protein RcsA (207 aa).

An HTH luxR-type domain is found at 131 to 196 (LNMPTLSLSR…VIYHVVRLTD (66 aa)). Residues 155–174 (TIQISDQMNIKAKTVSSHKG) constitute a DNA-binding region (H-T-H motif).

This sequence belongs to the RcsA family. As to quaternary structure, interacts with RcsB.

Functionally, component of the Rcs signaling system, which controls transcription of numerous genes. Binds, with RcsB, to the RcsAB box to regulate expression of genes. The protein is Transcriptional regulatory protein RcsA of Escherichia coli O157:H7.